A 634-amino-acid polypeptide reads, in one-letter code: 1,4-alpha-glucan branching enzyme GlgB (634 aa).

D305 acts as the Nucleophile in catalysis. E357 serves as the catalytic Proton donor.

This sequence belongs to the glycosyl hydrolase 13 family. GlgB subfamily. As to quaternary structure, monomer.

It carries out the reaction Transfers a segment of a (1-&gt;4)-alpha-D-glucan chain to a primary hydroxy group in a similar glucan chain.. The protein operates within glycan biosynthesis; glycogen biosynthesis. Functionally, catalyzes the formation of the alpha-1,6-glucosidic linkages in glycogen by scission of a 1,4-alpha-linked oligosaccharide from growing alpha-1,4-glucan chains and the subsequent attachment of the oligosaccharide to the alpha-1,6 position. This Lactiplantibacillus plantarum (strain ATCC BAA-793 / NCIMB 8826 / WCFS1) (Lactobacillus plantarum) protein is 1,4-alpha-glucan branching enzyme GlgB.